A 311-amino-acid chain; its full sequence is Malate dehydrogenase (311 aa).

NAD(+)-binding positions include 7–13 and aspartate 34; that span reads GAAGGIG. Positions 81 and 87 each coordinate substrate. NAD(+) is bound by residues asparagine 94 and 117 to 119; that span reads ITN. Positions 119 and 153 each coordinate substrate. The Proton acceptor role is filled by histidine 177. Methionine 227 provides a ligand contact to NAD(+).

This sequence belongs to the LDH/MDH superfamily. MDH type 1 family. As to quaternary structure, homodimer.

It carries out the reaction (S)-malate + NAD(+) = oxaloacetate + NADH + H(+). Catalyzes the reversible oxidation of malate to oxaloacetate. This is Malate dehydrogenase from Yersinia enterocolitica serotype O:8 / biotype 1B (strain NCTC 13174 / 8081).